The following is a 2380-amino-acid chain: DNA polymerase epsilon catalytic subunit A (2380 aa).

Positions 169–196 (YYNKGNNNNNNHQNYNNNNNQNNNNFNK) are enriched in low complexity. 5 disordered regions span residues 169-209 (YYNK…NNSK), 1178-1210 (FFEK…QQTD), 1766-1787 (KNTS…NDTT), 1967-1998 (QQQQ…KNKK), and 2059-2120 (KIST…TTTS). Residues 1183–1201 (EDNDQDNDNDNDNDNDNDN) show a composition bias toward acidic residues. A compositionally biased stretch (low complexity) spans 1767–1776 (NTSNNSNTKN). Over residues 1777–1787 (GANQNTTNDTT) the composition is skewed to polar residues. The span at 1975 to 1991 (NADDDDDDDVSENEEEQ) shows a compositional bias: acidic residues. Low complexity-rich tracts occupy residues 2059–2081 (KIST…TTKD) and 2110–2120 (SSSSSTTTTTS). Zn(2+) contacts are provided by Cys-2225 and Cys-2228. The CysA-type zinc finger occupies 2225 to 2288 (CSSCHSCRDI…RVPELSCIQC (64 aa)). Residues 2245–2258 (ISSRLSSQQKSNNN) are compositionally biased toward low complexity. Residues 2245–2275 (ISSRLSSQQKSNNNDSDDSDDDNEENEGDDD) are disordered. A compositionally biased stretch (acidic residues) spans 2259–2275 (DSDDSDDDNEENEGDDD). Residues Cys-2285 and Cys-2288 each coordinate Zn(2+). Residues Cys-2319, Cys-2322, Cys-2334, and Cys-2337 each coordinate [4Fe-4S] cluster. Residues 2319–2337 (CSKCNDVKSDNLGDICPQC) carry the CysB motif motif.

This sequence belongs to the DNA polymerase type-B family. As to quaternary structure, consists of three subunits: pole, pole2 and pole3. [4Fe-4S] cluster serves as cofactor.

It localises to the nucleus. The enzyme catalyses DNA(n) + a 2'-deoxyribonucleoside 5'-triphosphate = DNA(n+1) + diphosphate. Its function is as follows. DNA polymerase II participates in chromosomal DNA replication. In Dictyostelium discoideum (Social amoeba), this protein is DNA polymerase epsilon catalytic subunit A (pole).